The following is a 148-amino-acid chain: Flavodoxin (148 aa).

Residues 4–145 (VLILFGSSTG…AVSAFAEDVL (142 aa)) enclose the Flavodoxin-like domain.

It belongs to the flavodoxin family. Requires FMN as cofactor.

Its function is as follows. Low-potential electron donor to a number of redox enzymes. This Desulfovibrio desulfuricans (strain ATCC 27774 / DSM 6949 / MB) protein is Flavodoxin.